Consider the following 356-residue polypeptide: Retinoic acid-induced protein 3 (356 aa).

The Extracellular segment spans residues 1–35 (MTTPTTAPSGCRSDLDSRYHRLCDLAEGWGIALET). A helical transmembrane segment spans residues 36 to 56 (LAAVGAVATVACMFALVFLIC). Over 57-68 (KVQDSNKRKMLP) the chain is Cytoplasmic. The chain crosses the membrane as a helical span at residues 69 to 89 (AQFLFLLGVLGVFGLTFAFII). Topologically, residues 90–101 (KLDGATGPTRFF) are extracellular. Residues 102-122 (LFGVLFAICFSCLLAHAFNLI) form a helical membrane-spanning segment. The Cytoplasmic portion of the chain corresponds to 123–131 (KLVRGRKPL). A helical membrane pass occupies residues 132 to 152 (SWLVILSLAVGFSLVQDVIAI). At 153–178 (EYLVLTMNRTNVNVFSELPAPRRNED) the chain is on the extracellular side. N-linked (GlcNAc...) asparagine glycosylation occurs at Asn-160. A helical transmembrane segment spans residues 179–199 (FVMLLIYVLVLMVLTFFTSFL). The Cytoplasmic segment spans residues 200–214 (VFCGSFSGWKRHGFH). The chain crosses the membrane as a helical span at residues 215 to 235 (ICFTSFLSIAIWVAWIVLLLI). Residues 236–244 (PDIDRKWDD) are Extracellular-facing. Residues 245–265 (TILSTALVANGWVFLAFYILP) form a helical membrane-spanning segment. Residues 266-356 (EFRQLPRQRS…NDYEGRKGDS (91 aa)) are Cytoplasmic-facing. Phosphoserine is present on Ser-303. A phosphotyrosine mark is found at Tyr-318 and Tyr-321. The disordered stretch occupies residues 336–356 (IPRAQAPASPYNDYEGRKGDS). Residue Ser-344 is modified to Phosphoserine. 2 positions are modified to phosphotyrosine: Tyr-346 and Tyr-349.

Belongs to the G-protein coupled receptor 3 family. As to quaternary structure, interacts (via its transmembrane domain) with EGFR. Post-translationally, phosphorylated in two conserved double-tyrosine motifs, Tyr 318/Tyr-321 and Tyr-346/Tyr-349 by EGFR. Tyr-318 and Tyr-321 are the preferred residues responsible for EGFR-mediated GPRC5A phosphorylation. Expressed predominantly in normal fetal and adult lung. Almost undetectable or expressed at very low levels in other tissues.

It is found in the cell membrane. Orphan receptor. Could be involved in modulating differentiation and maintaining homeostasis of epithelial cells. This retinoic acid-inducible GPCR provides evidence for a possible interaction between retinoid and G-protein signaling pathways. Functions as a negative modulator of EGFR signaling. Acts as a lung tumor suppressor. This chain is Retinoic acid-induced protein 3 (Gprc5a), found in Mus musculus (Mouse).